Reading from the N-terminus, the 702-residue chain is MFYQPAQNKKQYDDLADIEAQNNVPNTQEVLEAWQESLDSDEDESSPLEESNGFTISEHDDFVKSVPRKNNPTDLLYSGKLLDSDEPPSVHGNSSKVPSKHPSPSFPETTSLRNLQNGSKQKPALPNFNDPHFYNEDVTRSGHPNRSIYTQLPRNEFSNARVLWNRLSARDRVLWRWANVENLDSFLQQVYTYYTGKGLSCIIVHRLFQILTVSFVIGFTTFITSCIDWPAVTPHGSLAGVTKSQCIAQMSPITYLVLWLFLSFLLALWIYYLTDIPRLWQMREFYIHALKIATADMPTVSWQRVLYRLLKLKNVNALTAEDGRVVSLHNMKRLDAYAIANRIMRKDNYFIALINNGIINIELPLLHRRILTHTTEWNINWCIFNFVFDEQGQLRSAFRNPNSRKRLSEELRRRFIVAGFLNCLFAPIVAIYLVIHNFFRYFNEYHKNPGALSTRRYTPLALWTFREYNELQHFFDERINDSYAAASHYVSQFPDFNMIRLFKYISFILGSFTAILVIITVFDPELMVTFEITKDRSVLFYLGLFGSLIAVSRSIIPDETLVFAPEKALRRVITFTHYMPGWWSDNMHSKAVQQEFCSLYSYRIVNLLWEILGILLTPVLLFFTFPSCSQDIVDFFREHTINVEGVGYVCSYAVFQDNPPYESVASLVQSRKISPLIQNKPELSRISFYEQFNTEAPRRDLR.

Residues Met1 to His205 lie on the Cytoplasmic side of the membrane. The segment at Gln35–Phe128 is disordered. Residues Leu38–Pro47 show a composition bias toward acidic residues. Low complexity predominate over residues Ser94–Pro107. Polar residues predominate over residues Glu108–Lys120. Residues Arg206–Ile223 form a helical membrane-spanning segment. Topologically, residues Thr224–Ser251 are lumenal. A helical membrane pass occupies residues Pro252–Ile270. Topologically, residues Tyr271–Leu421 are cytoplasmic. Residues Asn422 to His446 lie within the membrane without spanning it. Over Lys447–Phe496 the chain is Cytoplasmic. A helical membrane pass occupies residues Asn497–Phe522. Residues Asp523 to Ser537 are Lumenal-facing. Residues Val538–Ile555 traverse the membrane as a helical segment. At Ile556–Arg603 the chain is on the cytoplasmic side. The stretch at Ile604 to Thr624 is an intramembrane region. Residues Phe625–Arg702 lie on the Cytoplasmic side of the membrane.

This sequence belongs to the ATG9 family. As to quaternary structure, homotrimer; forms a homotrimer with a central pore that forms a path between the two membrane leaflets. Interacts with ctl1. Phosphorylated by atg1. Atg1 phosphorylation is required for preautophagosome elongation.

Its subcellular location is the preautophagosomal structure membrane. It is found in the cytoplasmic vesicle membrane. The protein localises to the golgi apparatus membrane. The protein resides in the endoplasmic reticulum membrane. The enzyme catalyses a 1,2-diacyl-sn-glycero-3-phosphocholine(in) = a 1,2-diacyl-sn-glycero-3-phosphocholine(out). It catalyses the reaction a 1,2-diacyl-sn-glycero-3-phospho-L-serine(in) = a 1,2-diacyl-sn-glycero-3-phospho-L-serine(out). The catalysed reaction is a 1,2-diacyl-sn-glycero-3-phosphoethanolamine(in) = a 1,2-diacyl-sn-glycero-3-phosphoethanolamine(out). It carries out the reaction a 1,2-diacyl-sn-glycero-3-phospho-(1D-myo-inositol-3-phosphate)(in) = a 1,2-diacyl-sn-glycero-3-phospho-(1D-myo-inositol-3-phosphate)(out). Phospholipid scramblase involved in autophagy and cytoplasm to vacuole transport (Cvt) vesicle formation. Cycles between the preautophagosomal structure/phagophore assembly site (PAS) and the cytoplasmic vesicle pool and supplies membrane for the growing autophagosome. Lipid scramblase activity plays a key role in preautophagosomal structure/phagophore assembly by distributing the phospholipids that arrive through atg2 from the cytoplasmic to the luminal leaflet of the bilayer, thereby driving autophagosomal membrane expansion. Also involved in endoplasmic reticulum-specific autophagic process and is essential for the survival of cells subjected to severe ER stress. Different machineries are required for anterograde trafficking to the PAS during either the Cvt pathway or bulk autophagy and for retrograde trafficking. Has a role in meiosis and sporulation. This chain is Autophagy-related protein 9, found in Schizosaccharomyces pombe (strain 972 / ATCC 24843) (Fission yeast).